We begin with the raw amino-acid sequence, 223 residues long: Ribose-5-phosphate isomerase A (223 aa).

Substrate is bound by residues Thr-32–Thr-35, Asp-85–Asp-88, and Lys-98–Gly-101. The active-site Proton acceptor is Glu-107. Lys-125 provides a ligand contact to substrate.

Belongs to the ribose 5-phosphate isomerase family. Homodimer.

The catalysed reaction is aldehydo-D-ribose 5-phosphate = D-ribulose 5-phosphate. It participates in carbohydrate degradation; pentose phosphate pathway; D-ribose 5-phosphate from D-ribulose 5-phosphate (non-oxidative stage): step 1/1. Its function is as follows. Catalyzes the reversible conversion of ribose-5-phosphate to ribulose 5-phosphate. The polypeptide is Ribose-5-phosphate isomerase A (Marinomonas sp. (strain MWYL1)).